A 124-amino-acid polypeptide reads, in one-letter code: UPF0738 protein ABC2521 (124 aa).

The protein belongs to the UPF0738 family.

This Shouchella clausii (strain KSM-K16) (Alkalihalobacillus clausii) protein is UPF0738 protein ABC2521.